The following is a 178-amino-acid chain: Large ribosomal subunit protein uL5 (178 aa).

Belongs to the universal ribosomal protein uL5 family. In terms of assembly, part of the 50S ribosomal subunit; part of the 5S rRNA/L5/L18/L25 subcomplex. Contacts the 5S rRNA and the P site tRNA. Forms a bridge to the 30S subunit in the 70S ribosome.

In terms of biological role, this is one of the proteins that bind and probably mediate the attachment of the 5S RNA into the large ribosomal subunit, where it forms part of the central protuberance. In the 70S ribosome it contacts protein S13 of the 30S subunit (bridge B1b), connecting the 2 subunits; this bridge is implicated in subunit movement. Contacts the P site tRNA; the 5S rRNA and some of its associated proteins might help stabilize positioning of ribosome-bound tRNAs. This chain is Large ribosomal subunit protein uL5, found in Acinetobacter baylyi (strain ATCC 33305 / BD413 / ADP1).